A 508-amino-acid polypeptide reads, in one-letter code: CXXC-type zinc finger protein 1 (508 aa).

Residues 10–47 (EDVWKERCMNCIRCNDEKNCGTCWPCRNGKTCDMRKCF) form a CXXC-type zinc finger. Disordered regions lie at residues 95–156 (QQVE…EPDK) and 453–508 (KSQS…TQNN). 2 stretches are compositionally biased toward low complexity: residues 113–123 (AAAAAQQRKAN) and 454–481 (SQST…SSSS).

In terms of assembly, component of the SET2 complex (also known as the SET1/COMPASS complex), which contains at least set-2, swd-2.1, cfp-1, rbbp-5, wdr-5.1, dpy-30 and ash-2. Within the complex, interacts with wdr-5.1, ash-2 and dpy-30. Also interacts with the SIN3S complex, which contains at least sin-3, hda-1, athp-1 and mrg-1. Interacts with sin-3, hda-1 and mrg-1.

It localises to the nucleus. Its function is as follows. Transcriptional activator that exhibits a unique DNA binding specificity for CpG motifs; enriched at promoters containing the trimethylation mark on histone H3 'Lys-4' (H3K4me3). Forms part of the SET2 complex and interacts with the SIN3S HDAC complex at promoters. Required for H3K4 trimethylation and plays a repressive role in the expression of heat shock and salt-inducible genes. Required for fertility, in cooperation with class I histone deacetylases (HDACs). The protein is CXXC-type zinc finger protein 1 of Caenorhabditis elegans.